We begin with the raw amino-acid sequence, 375 residues long: Queuine tRNA-ribosyltransferase (375 aa).

Residue D89 is the Proton acceptor of the active site. Residues 89–93 (DSGGF), D143, Q187, and G214 contribute to the substrate site. Residues 245–251 (GVGKPED) are RNA binding. D264 serves as the catalytic Nucleophile. Residues 269 to 273 (TRNAR) are RNA binding; important for wobble base 34 recognition. The Zn(2+) site is built by C302, C304, C307, and H333.

Belongs to the queuine tRNA-ribosyltransferase family. Homodimer. Within each dimer, one monomer is responsible for RNA recognition and catalysis, while the other monomer binds to the replacement base PreQ1. Requires Zn(2+) as cofactor.

It carries out the reaction 7-aminomethyl-7-carbaguanine + guanosine(34) in tRNA = 7-aminomethyl-7-carbaguanosine(34) in tRNA + guanine. The protein operates within tRNA modification; tRNA-queuosine biosynthesis. Its function is as follows. Catalyzes the base-exchange of a guanine (G) residue with the queuine precursor 7-aminomethyl-7-deazaguanine (PreQ1) at position 34 (anticodon wobble position) in tRNAs with GU(N) anticodons (tRNA-Asp, -Asn, -His and -Tyr). Catalysis occurs through a double-displacement mechanism. The nucleophile active site attacks the C1' of nucleotide 34 to detach the guanine base from the RNA, forming a covalent enzyme-RNA intermediate. The proton acceptor active site deprotonates the incoming PreQ1, allowing a nucleophilic attack on the C1' of the ribose to form the product. After dissociation, two additional enzymatic reactions on the tRNA convert PreQ1 to queuine (Q), resulting in the hypermodified nucleoside queuosine (7-(((4,5-cis-dihydroxy-2-cyclopenten-1-yl)amino)methyl)-7-deazaguanosine). The sequence is that of Queuine tRNA-ribosyltransferase from Escherichia coli O81 (strain ED1a).